Here is a 234-residue protein sequence, read N- to C-terminus: Probable transcriptional regulatory protein MYCGA1330 (234 aa).

The protein belongs to the TACO1 family.

It localises to the cytoplasm. The sequence is that of Probable transcriptional regulatory protein MYCGA1330 from Mycoplasmoides gallisepticum (strain R(low / passage 15 / clone 2)) (Mycoplasma gallisepticum).